Consider the following 108-residue polypeptide: Phosphoribosyl-AMP cyclohydrolase (108 aa).

Asp-73 contacts Mg(2+). Position 74 (Cys-74) interacts with Zn(2+). Positions 75 and 77 each coordinate Mg(2+). Residues Cys-90 and Cys-97 each coordinate Zn(2+).

Belongs to the PRA-CH family. In terms of assembly, homodimer. It depends on Mg(2+) as a cofactor. Requires Zn(2+) as cofactor.

Its subcellular location is the cytoplasm. The enzyme catalyses 1-(5-phospho-beta-D-ribosyl)-5'-AMP + H2O = 1-(5-phospho-beta-D-ribosyl)-5-[(5-phospho-beta-D-ribosylamino)methylideneamino]imidazole-4-carboxamide. It functions in the pathway amino-acid biosynthesis; L-histidine biosynthesis; L-histidine from 5-phospho-alpha-D-ribose 1-diphosphate: step 3/9. In terms of biological role, catalyzes the hydrolysis of the adenine ring of phosphoribosyl-AMP. This is Phosphoribosyl-AMP cyclohydrolase from Lactiplantibacillus plantarum (strain ATCC BAA-793 / NCIMB 8826 / WCFS1) (Lactobacillus plantarum).